A 406-amino-acid chain; its full sequence is Cysteine desulfurase (406 aa).

K226 bears the N6-(pyridoxal phosphate)lysine mark. The active-site Cysteine persulfide intermediate is C364.

This sequence belongs to the class-V pyridoxal-phosphate-dependent aminotransferase family. Csd subfamily. Homodimer. Interacts with SufE and the SufBCD complex composed of SufB, SufC and SufD. The interaction with SufE is required to mediate the direct transfer of the sulfur atom from the S-sulfanylcysteine. The cofactor is pyridoxal 5'-phosphate.

The protein resides in the cytoplasm. The catalysed reaction is (sulfur carrier)-H + L-cysteine = (sulfur carrier)-SH + L-alanine. It catalyses the reaction L-selenocysteine + AH2 = hydrogenselenide + L-alanine + A + H(+). It participates in cofactor biosynthesis; iron-sulfur cluster biosynthesis. In terms of biological role, cysteine desulfurases mobilize the sulfur from L-cysteine to yield L-alanine, an essential step in sulfur metabolism for biosynthesis of a variety of sulfur-containing biomolecules. Component of the suf operon, which is activated and required under specific conditions such as oxidative stress and iron limitation. Acts as a potent selenocysteine lyase in vitro, that mobilizes selenium from L-selenocysteine. Selenocysteine lyase activity is however unsure in vivo. The polypeptide is Cysteine desulfurase (Serratia proteamaculans (strain 568)).